A 317-amino-acid chain; its full sequence is E3 ubiquitin-protein ligase NRDP1 (317 aa).

The RING-type; degenerate zinc-finger motif lies at Cys-18–Arg-57. An SIAH-type; degenerate zinc finger spans residues Lys-78–Leu-138.

As to quaternary structure, interacts with USP8, ERBB3, PRKN and BIRC6. Interacts with CSF2RB, EPOR, IL3RA, MYD88 and TBK1. Interacts with Clec16a. Autoubiquitinated. Autoubiquitination leads to proteasomal degradation. Deubiquitinated by USP8 to get stabilized which induces apoptosis.

The enzyme catalyses S-ubiquitinyl-[E2 ubiquitin-conjugating enzyme]-L-cysteine + [acceptor protein]-L-lysine = [E2 ubiquitin-conjugating enzyme]-L-cysteine + N(6)-ubiquitinyl-[acceptor protein]-L-lysine.. It functions in the pathway protein modification; protein ubiquitination. Acts as E3 ubiquitin-protein ligase and regulates the degradation of target proteins. Polyubiquitinates MYD88. Negatively regulates MYD88-dependent production of pro-inflammatory cytokines. Can promote TRIF-dependent production of type I interferon and inhibits infection with vesicular stomatitis virus. Also promotes activation of TBK1 and IRF3. Involved in the ubiquitination of erythropoietin (EPO) and interleukin-3 (IL-3) receptors. Thus, through maintaining basal levels of cytokine receptors, RNF41 is involved in the control of hematopoietic progenitor cell differentiation into myeloerythroid lineages. Contributes to the maintenance of steady-state ERBB3 levels by mediating its growth factor-independent degradation. Involved in the degradation of the inhibitor of apoptosis BIRC6 and thus is an important regulator of cell death by promoting apoptosis. Also acts as a PRKN modifier that accelerates its degradation, resulting in a reduction of PRKN activity, influencing the balance of intracellular redox state. The RNF41-PRKN pathway regulates autophagosome-lysosome fusion during late mitophagy. Mitophagy is a selective form of autophagy necessary for mitochondrial quality control. The chain is E3 ubiquitin-protein ligase NRDP1 (Rnf41) from Mus musculus (Mouse).